The primary structure comprises 277 residues: Putative protease slr0021 (277 aa).

The Nucleophile role is filled by serine 85. Residue lysine 137 is the Proton donor/acceptor of the active site.

It belongs to the peptidase S49 family.

The chain is Putative protease slr0021 from Synechocystis sp. (strain ATCC 27184 / PCC 6803 / Kazusa).